We begin with the raw amino-acid sequence, 163 residues long: Nucleotide-binding protein tll0793 (163 aa).

The protein belongs to the YajQ family.

Its function is as follows. Nucleotide-binding protein. The polypeptide is Nucleotide-binding protein tll0793 (Thermosynechococcus vestitus (strain NIES-2133 / IAM M-273 / BP-1)).